Consider the following 319-residue polypeptide: MDGVTYQRFPTVKIRELKDDYAKFELRETDVSMANALRRVMISEVPTMAIHLVKIEVNSSVLNDEFIAQRLSLIPLTSERAMSMRFCQDCEDCNGDEHCEFCSVEFPLSAKCVTDQTLDVTSRDLYSADPTVTPVDFTSNSSTSDSSEHKGIIIAKLRRGQELKLKALARKGIGKDHAKWSPAATVTYMYEPDIIINEEMMNTLTDEEKIDLIESSPTKVFGIDPVTGQVVVVDPEAYTYDEEVIKKAEAMGKPGLIEIHPKHDSFVFTVESTGALKASQLVLNAIDILKQKLDAIRLSDNTVEADDQFGELGAHMREG.

Position 1 is an N-acetylmethionine (Met-1).

The protein belongs to the archaeal Rpo3/eukaryotic RPB3 RNA polymerase subunit family. Component of the RNA polymerase IV and V complexes. Interacts with NRPB11, SHH1, GRP23 and NRPD1.

It localises to the nucleus. In terms of biological role, DNA-dependent RNA polymerase catalyzes the transcription of DNA into RNA using the four ribonucleoside triphosphates as substrates. Component of RNA polymerases IV and V which mediate short-interfering RNAs (siRNA) accumulation and subsequent RNA-directed DNA methylation-dependent (RdDM) transcriptional gene silencing (TGS) of endogenous repeated sequences, including transposable elements. The polypeptide is DNA-directed RNA polymerases IV and V subunit 3B (NRPD3B) (Arabidopsis thaliana (Mouse-ear cress)).